Reading from the N-terminus, the 317-residue chain is Iron-uptake system-binding protein (317 aa).

Residues 1–19 (MKKISLTLLILLLALTAAA) form the signal peptide. Residue Cys-20 is the site of N-palmitoyl cysteine attachment. A lipid anchor (S-diacylglycerol cysteine) is attached at Cys-20. One can recognise a Fe/B12 periplasmic-binding domain in the interval 57–317 (IAITGSVESM…KAAAEKLTQN (261 aa)).

This sequence belongs to the bacterial solute-binding protein 8 family. As to quaternary structure, the complex is composed of one ATP-binding protein (YusV), two transmembrane proteins (FeuB and FeuC) and a solute-binding protein (FeuA).

The protein resides in the cell membrane. It is found in the cytoplasm. It localises to the membrane raft. Functionally, involved in the uptake of iron. Part of the ABC transporter complex FeuABC/YusV involved in import of the catecholate siderophores bacillibactin and enterobactin. In Bacillus subtilis (strain 168), this protein is Iron-uptake system-binding protein (feuA).